We begin with the raw amino-acid sequence, 234 residues long: Probable pectate lyase F (234 aa).

The signal sequence occupies residues 1–17 (MWSSIAAFPVLVPVALA).

The protein belongs to the polysaccharide lyase 3 family. Ca(2+) is required as a cofactor.

It localises to the secreted. The enzyme catalyses Eliminative cleavage of (1-&gt;4)-alpha-D-galacturonan to give oligosaccharides with 4-deoxy-alpha-D-galact-4-enuronosyl groups at their non-reducing ends.. Functionally, pectinolytic enzyme consist of four classes of enzymes: pectin lyase, polygalacturonase, pectin methylesterase and rhamnogalacturonase. Among pectinolytic enzymes, pectin lyase is the most important in depolymerization of pectin, since it cleaves internal glycosidic bonds of highly methylated pectins. Favors pectate, the anion, over pectin, the methyl ester. This is Probable pectate lyase F (plyF) from Aspergillus fumigatus (strain ATCC MYA-4609 / CBS 101355 / FGSC A1100 / Af293) (Neosartorya fumigata).